The sequence spans 669 residues: Alpha-1,4-glucan:maltose-1-phosphate maltosyltransferase 2 (669 aa).

Alpha-maltose 1-phosphate contacts are provided by Lys255, Gln315, and Asp350. Residue Asp385 is the Nucleophile of the active site. Alpha-maltose 1-phosphate is bound at residue Asn386. The active-site Proton donor is Glu414. 525 to 526 (KY) is an alpha-maltose 1-phosphate binding site.

Belongs to the glycosyl hydrolase 13 family. GlgE subfamily. In terms of assembly, homodimer.

The enzyme catalyses alpha-maltose 1-phosphate + [(1-&gt;4)-alpha-D-glucosyl](n) = [(1-&gt;4)-alpha-D-glucosyl](n+2) + phosphate. Its function is as follows. Maltosyltransferase that uses maltose 1-phosphate (M1P) as the sugar donor to elongate linear or branched alpha-(1-&gt;4)-glucans. Maltooligosaccharides with a degree of polymerization (DP) superior or equal to 4 are efficient acceptors, with DP6 being optimal in the GlgE-catalyzed polymerization with M1P. Is probably involved in a branched alpha-glucan biosynthetic pathway from trehalose, together with TreS, Mak and GlgB. This chain is Alpha-1,4-glucan:maltose-1-phosphate maltosyltransferase 2 (glgE2), found in Streptomyces coelicolor (strain ATCC BAA-471 / A3(2) / M145).